Reading from the N-terminus, the 289-residue chain is 3-methyl-2-oxobutanoate hydroxymethyltransferase (289 aa).

The Mg(2+) site is built by Asp50 and Asp89. 3-methyl-2-oxobutanoate contacts are provided by residues 50–51, Asp89, and Lys119; that span reads DS. Mg(2+) is bound at residue Glu121. Residue Glu188 is the Proton acceptor of the active site. Residues 266–289 form a disordered region; it reads AQHSFGMPEDEQRRWEENVSGADD.

The protein belongs to the PanB family. In terms of assembly, homodecamer; pentamer of dimers. Mg(2+) serves as cofactor.

The protein localises to the cytoplasm. It carries out the reaction 3-methyl-2-oxobutanoate + (6R)-5,10-methylene-5,6,7,8-tetrahydrofolate + H2O = 2-dehydropantoate + (6S)-5,6,7,8-tetrahydrofolate. It participates in cofactor biosynthesis; (R)-pantothenate biosynthesis; (R)-pantoate from 3-methyl-2-oxobutanoate: step 1/2. Its function is as follows. Catalyzes the reversible reaction in which hydroxymethyl group from 5,10-methylenetetrahydrofolate is transferred onto alpha-ketoisovalerate to form ketopantoate. This is 3-methyl-2-oxobutanoate hydroxymethyltransferase from Oleidesulfovibrio alaskensis (strain ATCC BAA-1058 / DSM 17464 / G20) (Desulfovibrio alaskensis).